The sequence spans 185 residues: MLADILQEAEEKMKKAVEGLRRELASLRAGRANPALLEKVLVSYYGTPTPVNQLATVSSPEARLLVIQPWDRNILPEIEKAILKSDLGLTPSSDGTVIRITIPQLTEERRSELVKVARKKAEEFRVMVRNARREANDKLKASEKNKEASEDEVKRAQEKVQKTTDNYIQIIDKILATKEAEIMEV.

Positions 135 to 159 (ANDKLKASEKNKEASEDEVKRAQEK) are disordered.

It belongs to the RRF family.

The protein resides in the cytoplasm. In terms of biological role, responsible for the release of ribosomes from messenger RNA at the termination of protein biosynthesis. May increase the efficiency of translation by recycling ribosomes from one round of translation to another. In Moorella thermoacetica (strain ATCC 39073 / JCM 9320), this protein is Ribosome-recycling factor.